The sequence spans 33 residues: Potassium channel toxin alpha-KTx 10.4 (33 aa).

3 disulfide bridges follow: Cys3/Cys22, Cys8/Cys27, and Cys12/Cys29.

Belongs to the short scorpion toxin superfamily. Potassium channel inhibitor family. Alpha-KTx 10 subfamily. In terms of tissue distribution, expressed by the venom gland.

Its subcellular location is the secreted. In terms of biological role, blocks human voltage-gated potassium channel Kv1.2/KCNA2 (IC(50)=3.6 nM) and Kv1.3/KCNA3 (IC(50)=72 nM). The chain is Potassium channel toxin alpha-KTx 10.4 from Centruroides tecomanus (Scorpion).